We begin with the raw amino-acid sequence, 184 residues long: Oligoribonuclease (184 aa).

Residues 7-170 (LIWIDLEMTG…DDIYESIEEL (164 aa)) form the Exonuclease domain. Y128 is a catalytic residue.

It belongs to the oligoribonuclease family.

The protein resides in the cytoplasm. 3'-to-5' exoribonuclease specific for small oligoribonucleotides. In Hydrogenovibrio crunogenus (strain DSM 25203 / XCL-2) (Thiomicrospira crunogena), this protein is Oligoribonuclease.